Here is a 397-residue protein sequence, read N- to C-terminus: Calponin-like protein clik-2 (397 aa).

Calponin-like repeat units lie at residues 29-54, 73-98, 119-144, 161-189, 209-234, and 255-280; these read LSQQ…RWNI, LRVQ…RFQV, IPKQ…RNQV, LCFQ…RQAT, TPWY…RDVL, and VPLQ…RNTQ. The segment at 301–397 is disordered; that stretch reads EETKPPGSAS…EEEEEEEEDE (97 aa). Residues 321–332 show a composition bias toward basic and acidic residues; it reads KFEERESSRQSE. 2 stretches are compositionally biased toward acidic residues: residues 344-360 and 367-397; these read VEPE…EEKI and EEEE…EEDE.

Belongs to the calponin family. In terms of tissue distribution, expressed in pharyngeal muscle cells (at protein level).

In terms of biological role, required for pharyngeal pumping. This is Calponin-like protein clik-2 from Caenorhabditis elegans.